Here is a 669-residue protein sequence, read N- to C-terminus: MFFIKLFTIFFLSFFWQSLKSSSQIIDFTYNGFRPPPTDISILGIATITPNGLLKLTNTTMQSTGHAFYTKPIRFKDSPNGTVSSFSTTFVFAIHSQIPIAHGMAFVIAPNPRLPFGSPLQYLGLFNVTNNGNVRNHVFAVELDTIMNIEFNDTNNNHVGIDINSLNSVKSSPAGYWDENDQFHNLTLISSKRMQVWVDFDGPTHLIDVTMAPFGEVKPRKPLVSIVRDLSSVLLQDMFVGFSSATGNIVSEIFVLGWSFGVNGEAQPLALSKLPRLPVWDLKPTRVYRFYKNWVPLISLLLIPFLLIIFLVRFIMKRRRKFAEEVEDWETEFGKNRLRFKDLYYATKGFKDKNILGSGGFGSVYKGIMPKTKKEIAVKRVSNESRQGLKEFVAEIVSIGQMSHRNLVPLVGYCRRRDELLLVYDYMPNGSLDKYLYNSPEVTLDWKQRFKVINGVASALFYLHEEWEQVVIHRDVKASNVLLDAELNGRLGDFGLAQLCDHGSDPQTTRVVGTWGYLAPDHIRTGRATTTTDVFAFGVLLLEVACGRRPIEINNQSGERVVLVDWVFRFWMEANILDAKDPNLGSEYDQKEVEMVLKLGLLCSHSDPLARPTMRQVLQYLRGDAMLPDLSPLDLRGSGIMLGTHNGSNESGMFTSGSSVAYSLLSSGR.

An N-terminal signal peptide occupies residues 1-23 (MFFIKLFTIFFLSFFWQSLKSSS). The Extracellular segment spans residues 24–294 (QIIDFTYNGF…TRVYRFYKNW (271 aa)). Residues 26–260 (IDFTYNGFRP…SEIFVLGWSF (235 aa)) form a legume-lectin like region. N58, N80, N127, N152, and N185 each carry an N-linked (GlcNAc...) asparagine glycan. A helical membrane pass occupies residues 295 to 315 (VPLISLLLIPFLLIIFLVRFI). Residues 316 to 669 (MKRRRKFAEE…VAYSLLSSGR (354 aa)) lie on the Cytoplasmic side of the membrane. The 278-residue stretch at 350–627 (FKDKNILGSG…LQYLRGDAML (278 aa)) folds into the Protein kinase domain. ATP-binding positions include 356 to 364 (LGSGGFGSV) and K379. The Proton acceptor role is filled by D475.

It in the C-terminal section; belongs to the protein kinase superfamily. Ser/Thr protein kinase family. This sequence in the N-terminal section; belongs to the leguminous lectin family.

The protein localises to the cell membrane. The enzyme catalyses L-seryl-[protein] + ATP = O-phospho-L-seryl-[protein] + ADP + H(+). It carries out the reaction L-threonyl-[protein] + ATP = O-phospho-L-threonyl-[protein] + ADP + H(+). In terms of biological role, involved in resistance response to the pathogenic oomycetes Phytophthora infestans and Phytophthora capsici and to the pathogenic bacteria Pseudomonas syringae. This is L-type lectin-domain containing receptor kinase IV.4 from Arabidopsis thaliana (Mouse-ear cress).